We begin with the raw amino-acid sequence, 497 residues long: MNDKTENTLSSDVTEVRAQKLKLLREQVGDVYPAHFHRTLTNAELGAKYESLESDVETQDVVTVAGRVYSSRNSGMFMDIHDASGKIQIFSHKDTTPEEARALLPMIDIGDIIGVTGIVRRTKRGELTINAQKIEMLTKSLLPMPEKWHGLSDIELRYRKRHLDIMTNEDSKLRFQQRSKIVSGIRRFMENDGFMEVETPMLQSIYGGATAEPFKTHHNTLKLDMYLRIAPELFLKRTLVSGLTDKVFEINRNFRNEGVSTRHNPEFTMMECYWAYADYEDMMDLVERLFETLALSIHGTTEFDFGDKQLSFKGPFKRVPMPDAVKQVTGIDFLAIKTDEEARTAAKAAGFAVEKDWTWGECLAFIFEEKVESTLIQPSHVTHFPKDISPFAKEVPGEPRLVERFETYCNAWELGNAFSELNDPEEQRRRMVEQLEQAHARGEKEKQLDEEFLDAIDQGMPPAGGLGIGVDRLIMLLTNAPSIRDVILFPARRNKAD.

Residues E406 and E413 each contribute to the Mg(2+) site.

Belongs to the class-II aminoacyl-tRNA synthetase family. In terms of assembly, homodimer. Mg(2+) is required as a cofactor.

Its subcellular location is the cytoplasm. It carries out the reaction tRNA(Lys) + L-lysine + ATP = L-lysyl-tRNA(Lys) + AMP + diphosphate. This Rhizobium leguminosarum bv. trifolii (strain WSM2304) protein is Lysine--tRNA ligase.